The following is a 209-amino-acid chain: GTP cyclohydrolase-2 (209 aa).

Residue 49 to 53 (RIHSE) coordinates GTP. 3 residues coordinate Zn(2+): Cys54, Cys65, and Cys67. GTP is bound by residues Gln70, 92–94 (EGR), and Thr114. Asp126 (proton acceptor) is an active-site residue. The Nucleophile role is filled by Arg128. GTP contacts are provided by Thr149 and Lys154.

Belongs to the GTP cyclohydrolase II family. It depends on Zn(2+) as a cofactor.

It catalyses the reaction GTP + 4 H2O = 2,5-diamino-6-hydroxy-4-(5-phosphoribosylamino)-pyrimidine + formate + 2 phosphate + 3 H(+). It participates in cofactor biosynthesis; riboflavin biosynthesis; 5-amino-6-(D-ribitylamino)uracil from GTP: step 1/4. Functionally, catalyzes the conversion of GTP to 2,5-diamino-6-ribosylamino-4(3H)-pyrimidinone 5'-phosphate (DARP), formate and pyrophosphate. This is GTP cyclohydrolase-2 from Shewanella pealeana (strain ATCC 700345 / ANG-SQ1).